The following is a 3411-amino-acid chain: Genome polyprotein (3411 aa).

Residues 1-104 lie on the Cytoplasmic side of the membrane; sequence MSGRKAQGKT…LSSRKRRSHD (104 aa). Positions 38–72 are hydrophobic; homodimerization of capsid protein C; that stretch reads PGPSRGVQGFIFFFLFNILTGKKITAQLKRLWKML. Residues 102–121 constitute a propeptide, ER anchor for the capsid protein C, removed in mature form by serine protease NS3; sequence SHDVLTVQFLILGMLLMTGG. The chain crosses the membrane as a helical span at residues 105–125; it reads VLTVQFLILGMLLMTGGVTLM. Over 126–244 the chain is Extracellular; it reads RKNRWLLLNV…GERQLQKIER (119 aa). Asn134 and Asn150 each carry an N-linked (GlcNAc...) asparagine; by host glycan. The helical transmembrane segment at 245–265 threads the bilayer; it reads WFVRNPFFAVTALTIAYLVGS. The Cytoplasmic segment spans residues 266–270; it reads NMTQR. Residues 271-285 traverse the membrane as a helical segment; the sequence is VVIALLVLAVGPAYS. Topologically, residues 286–730 are extracellular; the sequence is AHCIGVADRD…TVFGSAFQGL (445 aa). Disulfide bonds link Cys288-Cys315, Cys345-Cys401, Cys345-Cys406, Cys359-Cys390, Cys377-Cys401, Cys377-Cys406, Cys467-Cys568, and Cys585-Cys615. The tract at residues 383 to 396 is fusion peptide; sequence DRGWGNGCGLFGKG. A helical membrane pass occupies residues 731-751; that stretch reads FGGLNWITKVIMGAVLIWVGF. Topologically, residues 752–757 are cytoplasmic; the sequence is NTRNMT. Residues 758 to 778 traverse the membrane as a helical segment; the sequence is MSMSMILVGVIMMFLSLGVGA. The Extracellular segment spans residues 779-1132; that stretch reads DQGCAINFGK…LVRSWVTAGE (354 aa). 6 disulfide bridges follow: Cys782–Cys793, Cys833–Cys921, Cys957–Cys1002, Cys1058–Cys1107, Cys1069–Cys1091, and Cys1090–Cys1094. N-linked (GlcNAc...) asparagine; by host glycans are attached at residues Asn908 and Asn986. A helical membrane pass occupies residues 1133–1153; it reads IHAVPFGLVSMMIAMEVVLRK. Residues 1154 to 1201 are Cytoplasmic-facing; sequence RQGPKQVLVGGVVLLGAMLVGQVTLLDLLELTVAVGLHFHEMNNGGDA. The helical transmembrane segment at 1202–1222 threads the bilayer; sequence MYMALIAAFSVRPGLLIGFGL. Over 1223–1287 the chain is Lumenal; the sequence is RTLWSPRERL…ILPLMALLTP (65 aa). The chain crosses the membrane as a helical span at residues 1288–1308; it reads VTMAEVRLATMLFCTVVIIGV. At 1309–1355 the chain is on the cytoplasmic side; that stretch reads LHQNSKDTSMQKTIPLVALTLTSYLGLTQPFLGLCAFLATRIFGRRS. A helical membrane pass occupies residues 1356–1376; sequence IPVNEALAATGLVGVLAGLAF. Residues 1377–1378 lie on the Lumenal side of the membrane; it reads QE. Residues 1379–1399 form a helical membrane-spanning segment; sequence MENFLGPIAVGGILMMLVSVA. Residues 1400 to 1456 are Cytoplasmic-facing; sequence GRVDGLELKKLGEVSWEEEAEISGSSARYDVALSEQGEFKLLSEEKVPWDQVVMTSL. The interval 1407 to 1446 is interacts with and activates NS3 protease; sequence LKKLGEVSWEEEAEISGSSARYDVALSEQGEFKLLSEEKV. Positions 1457–1477 form an intramembrane region, helical; sequence ALVGAAIHPFALLLVLAGWLF. Over 1478–2157 the chain is Cytoplasmic; it reads HVRRARRSGD…RNALSMMPEA (680 aa). The 181-residue stretch at 1485–1665 folds into the Peptidase S7 domain; sequence SGDVLWDIPT…EVKEEGKEEL (181 aa). Residues His1537, Asp1561, and Ser1622 each act as charge relay system; for serine protease NS3 activity in the active site. Residues 1669-1825 enclose the Helicase ATP-binding domain; the sequence is PTMLKKGKTT…HSNGEIEDVQ (157 aa). The segment at 1673–1676 is important for RNA-binding; sequence KKGK. 1682-1689 provides a ligand contact to ATP; the sequence is FHPGAGKT. A DEAH box motif is present at residues 1773-1776; sequence DEAH. Residues 1820–1997 enclose the Helicase C-terminal domain; the sequence is EIEDVQTDIP…VRGGMVAPLY (178 aa). Lys1877 is subject to N6-acetyllysine; by host. A disordered region spans residues 1942–1961; the sequence is AAQRRGRIGRNPNRDGDSYY. Residues 2158–2178 form a helical membrane-spanning segment; sequence MTIVMLFLLAGLLTSGMVIFF. Residues 2179 to 2186 lie on the Lumenal side of the membrane; that stretch reads MSPKGISR. Positions 2187–2207 form an intramembrane region, helical; it reads MSMAKGTMAGCGYLMFLGGVE. Topologically, residues 2208 to 2209 are lumenal; sequence PT. Residues 2210-2230 form a helical membrane-spanning segment; sequence HISYIMLIFFVLMVVVIPEPG. The Cytoplasmic portion of the chain corresponds to 2231–2241; it reads QQRSIQDNQVA. A helical membrane pass occupies residues 2242–2256; it reads FLIIGILTLVSVVAA. Residues 2257-2293 are Lumenal-facing; sequence NELGMLEKTKEDLFGKKNLIPSGASPWSWPDLDLKPG. An intramembrane region (helical) is located at residues 2294–2314; that stretch reads AAWTVYVGIVTMLSPMLHHWI. Topologically, residues 2315–2360 are lumenal; sequence KVEYGNLSLSGIAQSASVLSFMDKGIPFMKMNISVIMLLVSGWNSI. Residues 2361 to 2380 traverse the membrane as a helical segment; the sequence is TVMPLLCGIGCAMLHWSLIL. Topologically, residues 2381–2421 are cytoplasmic; the sequence is PGIKAQQSKLAQRRVFHGVAKNPVVDGNPTVDIEEAPEMPA. The chain crosses the membrane as a helical span at residues 2422–2442; sequence LYEKKLALYLLLALSLASVAM. The Lumenal portion of the chain corresponds to 2443-2445; it reads CRT. The helical transmembrane segment at 2446 to 2466 threads the bilayer; sequence PFSLDEGIVLASAALGPLIEG. Residues 2467–3411 lie on the Cytoplasmic side of the membrane; the sequence is NTSLLWNGPM…DADLQPGELI (945 aa). In terms of domain architecture, mRNA cap 0-1 NS5-type MT spans 2507–2771; that stretch reads GTANGKTLGE…DVTLPIGTRS (265 aa). An S-adenosyl-L-methionine-binding site is contributed by Ser2562. The residue at position 2562 (Ser2562) is a Phosphoserine. The active-site For 2'-O-MTase activity is the Lys2567. 6 residues coordinate S-adenosyl-L-methionine: Gly2592, Trp2593, Thr2610, Leu2611, Asp2637, and Val2638. Asp2652 (for 2'-O-MTase activity) is an active-site residue. S-adenosyl-L-methionine is bound at residue Ile2653. Active-site for 2'-O-MTase activity residues include Lys2688 and Glu2724. Tyr2726 contacts S-adenosyl-L-methionine. Positions 2878–2911 match the Nuclear localization signal motif; sequence RKIMKVVNRWLFRHLAREKNPRLCTKEEFIAKVR. Residues Glu2945, His2949, Cys2954, and Cys2957 each contribute to the Zn(2+) site. A RdRp catalytic domain is found at 3035–3187; that stretch reads GGLYADDTAG…RPIDDRFGLA (153 aa). Zn(2+) is bound by residues His3222, Cys3238, and Cys3357.

This sequence in the N-terminal section; belongs to the class I-like SAM-binding methyltransferase superfamily. mRNA cap 0-1 NS5-type methyltransferase family. As to quaternary structure, homodimer. Interacts (via N-terminus) with host EXOC1 (via C-terminus); this interaction results in EXOC1 degradation through the proteasome degradation pathway. In terms of assembly, forms heterodimers with envelope protein E in the endoplasmic reticulum and Golgi. Homodimer; in the endoplasmic reticulum and Golgi. Interacts with protein prM. Interacts with non-structural protein 1. As to quaternary structure, homodimer; Homohexamer when secreted. Interacts with envelope protein E. In terms of assembly, interacts (via N-terminus) with serine protease NS3. Forms a heterodimer with serine protease NS3. May form homooligomers. As to quaternary structure, forms a heterodimer with NS2B. Interacts with non-structural protein 2A (via N-terminus). Interacts with NS4B. Interacts with unphosphorylated RNA-directed RNA polymerase NS5; this interaction stimulates RNA-directed RNA polymerase NS5 guanylyltransferase activity. NS3 interacts with host PDCD6IP; this interaction contributes to virion release. In terms of assembly, interacts with serine protease NS3. Homodimer. Interacts with host STAT2; this interaction prevents the establishment of cellular antiviral state. Interacts with serine protease NS3. Interacts with host TRIM23; this interaction leads to NS5 ubiquitination. In terms of processing, specific enzymatic cleavages in vivo yield mature proteins. The nascent capsid protein C contains a C-terminal hydrophobic domain that act as a signal sequence for translocation of prM into the lumen of the ER. Mature capsid protein C is cleaved at a site upstream of this hydrophobic domain by NS3. prM is cleaved in post-Golgi vesicles by a host furin, releasing the mature small envelope protein M, and peptide pr. Non-structural protein 2A-alpha, a C-terminally truncated form of non-structural protein 2A, results from partial cleavage by NS3. Specific enzymatic cleavages in vivo yield mature proteins peptide 2K acts as a signal sequence and is removed from the N-terminus of NS4B by the host signal peptidase in the ER lumen. Signal cleavage at the 2K-4B site requires a prior NS3 protease-mediated cleavage at the 4A-2K site. Post-translationally, cleaved in post-Golgi vesicles by a host furin, releasing the mature small envelope protein M, and peptide pr. This cleavage is incomplete as up to 30% of viral particles still carry uncleaved prM. N-glycosylated. In terms of processing, N-glycosylated. The excreted form is glycosylated and this is required for efficient secretion of the protein from infected cells. Post-translationally, polyubiquitinated; ubiquitination is probably mediated by host TRIM23 and is prerequisite for NS5-STAT2 interaction. NS5 is not ISGylated or sumoylated. Acetylated by host KAT5. Acetylation modulates NS3 RNA-binding and unwinding activities and plays an important positive role for viral replication. In terms of processing, phosphorylated on serines residues. This phosphorylation may trigger NS5 nuclear localization.

The protein localises to the virion. It localises to the host nucleus. The protein resides in the host cytoplasm. It is found in the host perinuclear region. Its subcellular location is the secreted. The protein localises to the virion membrane. It localises to the host endoplasmic reticulum membrane. The catalysed reaction is Selective hydrolysis of -Xaa-Xaa-|-Yaa- bonds in which each of the Xaa can be either Arg or Lys and Yaa can be either Ser or Ala.. The enzyme catalyses RNA(n) + a ribonucleoside 5'-triphosphate = RNA(n+1) + diphosphate. It catalyses the reaction a ribonucleoside 5'-triphosphate + H2O = a ribonucleoside 5'-diphosphate + phosphate + H(+). It carries out the reaction ATP + H2O = ADP + phosphate + H(+). The catalysed reaction is a 5'-end (5'-triphosphoguanosine)-ribonucleoside in mRNA + S-adenosyl-L-methionine = a 5'-end (N(7)-methyl 5'-triphosphoguanosine)-ribonucleoside in mRNA + S-adenosyl-L-homocysteine. The enzyme catalyses a 5'-end (N(7)-methyl 5'-triphosphoguanosine)-ribonucleoside in mRNA + S-adenosyl-L-methionine = a 5'-end (N(7)-methyl 5'-triphosphoguanosine)-(2'-O-methyl-ribonucleoside) in mRNA + S-adenosyl-L-homocysteine + H(+). Plays a role in virus budding by binding to the cell membrane and gathering the viral RNA into a nucleocapsid that forms the core of a mature virus particle. During virus entry, may induce genome penetration into the host cytoplasm after hemifusion induced by the surface proteins. Can migrate to the cell nucleus where it modulates host functions. Its function is as follows. Inhibits RNA silencing by interfering with host Dicer. In terms of biological role, prevents premature fusion activity of envelope proteins in trans-Golgi by binding to envelope protein E at pH6.0. After virion release in extracellular space, gets dissociated from E dimers. Functionally, acts as a chaperone for envelope protein E during intracellular virion assembly by masking and inactivating envelope protein E fusion peptide. prM is the only viral peptide matured by host furin in the trans-Golgi network probably to avoid catastrophic activation of the viral fusion activity in acidic Golgi compartment prior to virion release. prM-E cleavage is inefficient, and many virions are only partially matured. These uncleaved prM would play a role in immune evasion. May play a role in virus budding. Exerts cytotoxic effects by activating a mitochondrial apoptotic pathway through M ectodomain. May display a viroporin activity. Its function is as follows. Binds to host cell surface receptor and mediates fusion between viral and cellular membranes. Envelope protein is synthesized in the endoplasmic reticulum in the form of heterodimer with protein prM. They play a role in virion budding in the ER, and the newly formed immature particle is covered with 60 spikes composed of heterodimer between precursor prM and envelope protein E. The virion is transported to the Golgi apparatus where the low pH causes dissociation of PrM-E heterodimers and formation of E homodimers. prM-E cleavage is inefficient, and many virions are only partially matured. These uncleaved prM would play a role in immune evasion. In terms of biological role, involved in immune evasion, pathogenesis and viral replication. Once cleaved off the polyprotein, is targeted to three destinations: the viral replication cycle, the plasma membrane and the extracellular compartment. Essential for viral replication. Required for formation of the replication complex and recruitment of other non-structural proteins to the ER-derived membrane structures. Excreted as a hexameric lipoparticle that plays a role against host immune response. Antagonizing the complement function. Binds to the host macrophages and dendritic cells. Inhibits signal transduction originating from Toll-like receptor 3 (TLR3). Functionally, component of the viral RNA replication complex that functions in virion assembly and antagonizes the host immune response. Required cofactor for the serine protease function of NS3. May have membrane-destabilizing activity and form viroporins. Its function is as follows. Displays three enzymatic activities: serine protease, NTPase and RNA helicase. NS3 serine protease, in association with NS2B, performs its autocleavage and cleaves the polyprotein at dibasic sites in the cytoplasm: C-prM, NS2A-NS2B, NS2B-NS3, NS3-NS4A, NS4A-2K and NS4B-NS5. NS3 RNA helicase binds RNA and unwinds dsRNA in the 3' to 5' direction. Also plays a role in virus assembly. In terms of biological role, regulates the ATPase activity of the NS3 helicase activity. NS4A allows NS3 helicase to conserve energy during unwinding. Functionally, functions as a signal peptide for NS4B and is required for the interferon antagonism activity of the latter. Induces the formation of ER-derived membrane vesicles where the viral replication takes place. Inhibits interferon (IFN)-induced host STAT1 phosphorylation and nuclear translocation, thereby preventing the establishment of cellular antiviral state by blocking the IFN-alpha/beta pathway. Its function is as follows. Replicates the viral (+) and (-) RNA genome, and performs the capping of genomes in the cytoplasm. NS5 methylates viral RNA cap at guanine N-7 and ribose 2'-O positions. Besides its role in RNA genome replication, also prevents the establishment of cellular antiviral state by blocking the interferon-alpha/beta (IFN-alpha/beta) signaling pathway. IFN-I induces binding of NS5 to host IFN-activated transcription factor STAT2, preventing its transcriptional activity. Host TRIM23 is the E3 ligase that interacts with and polyubiquitinates NS5 to promote its binding to STAT2 and trigger IFN-I signaling inhibition. This chain is Genome polyprotein, found in Aedes aegypti (Yellowfever mosquito).